The chain runs to 93 residues: DNA/RNA-binding protein Alba (93 aa).

Position 11 is an N6-acetyllysine (Lys-11).

It belongs to the histone-like Alba family. In terms of processing, acetylated. Acetylation at Lys-11 decreases DNA-binding affinity.

The protein resides in the cytoplasm. The protein localises to the chromosome. In terms of biological role, binds double-stranded DNA tightly but without sequence specificity. Involved in DNA compaction. This is DNA/RNA-binding protein Alba from Pyrococcus horikoshii (strain ATCC 700860 / DSM 12428 / JCM 9974 / NBRC 100139 / OT-3).